Here is a 230-residue protein sequence, read N- to C-terminus: AA9 family lytic polysaccharide monooxygenase H (230 aa).

The N-terminal stretch at 1–17 is a signal peptide; it reads MKTLSAGLLALASAASA. Histidine 18 and histidine 89 together coordinate Cu(2+). Residues cysteine 59 and cysteine 178 are joined by a disulfide bond. O2-binding residues include histidine 164 and glutamine 173. Position 175 (tyrosine 175) interacts with Cu(2+).

It belongs to the polysaccharide monooxygenase AA9 family. Cu(2+) is required as a cofactor.

Its subcellular location is the secreted. It carries out the reaction [(1-&gt;4)-beta-D-glucosyl]n+m + reduced acceptor + O2 = 4-dehydro-beta-D-glucosyl-[(1-&gt;4)-beta-D-glucosyl]n-1 + [(1-&gt;4)-beta-D-glucosyl]m + acceptor + H2O.. Functionally, lytic polysaccharide monooxygenase (LPMO) that depolymerizes crystalline and amorphous polysaccharides via the oxidation of scissile alpha- or beta-(1-4)-glycosidic bonds, yielding primarly C1 oxidation products. Catalysis by LPMOs requires the reduction of the active-site copper from Cu(II) to Cu(I) by a reducing agent and H(2)O(2) or O(2) as a cosubstrate. Active on hemicelluloses, including xylan, glucomannan, and xyloglucan. Preferentially cleaves residual xylan in phosphoric acid-swollen cellulose (PASC). Moreover, when exposed to cellulose-xylan blends, shows a preference for xylan and for releasing oxidized xylooligosaccharides. Has no activity on ivory nut mannan (INM), a linear beta-1,4-linked mannan without substitutions. In Malbranchea cinnamomea (Thermophilic fungus), this protein is AA9 family lytic polysaccharide monooxygenase H.